Reading from the N-terminus, the 74-residue chain is Kappa-scoloptoxin(07)-Ssm2a (74 aa).

Residues Met-1 to Gly-19 form the signal peptide. The propeptide occupies Ala-20–Asn-41.

This sequence belongs to the scoloptoxin-07 family. Contains 3 disulfide bonds. As to expression, expressed by the venom gland.

It is found in the secreted. In terms of biological role, toxin that inhibits voltage-gated potassium channel currents in DRG neurons (IC(50)=about 570 nM). In vivo, induces neurotoxicity shown by twitching, paralysis, and body contraction. In vivo, insects injected with this toxin showed signs of neurotoxicity including twitching, paralysis, and body contraction. The sequence is that of Kappa-scoloptoxin(07)-Ssm2a from Scolopendra mutilans (Chinese red-headed centipede).